The following is a 156-amino-acid chain: Nucleoredoxin-like protein 2 (156 aa).

Residues 9 to 147 (HLVTCKGATV…LACFQDWVEA (139 aa)) form the Thioredoxin domain.

It belongs to the nucleoredoxin family.

In terms of biological role, may be involved in the maintenance of both the function and the viability of sensory neurons, including photoreceptors and olfactory neurons. This chain is Nucleoredoxin-like protein 2 (NXNL2), found in Homo sapiens (Human).